Consider the following 158-residue polypeptide: Putative tyrosine-protein phosphatase OCA1 (158 aa).

The Tyrosine-protein phosphatase domain occupies 7 to 158; that stretch reads NYGMVEENFY…DEELVFGASY (152 aa). C99 functions as the Phosphocysteine intermediate in the catalytic mechanism.

The protein belongs to the protein-tyrosine phosphatase family.

It localises to the cytoplasm. It catalyses the reaction O-phospho-L-tyrosyl-[protein] + H2O = L-tyrosyl-[protein] + phosphate. In terms of biological role, putative tyrosine-protein phosphatase required for protection against superoxide stress. The sequence is that of Putative tyrosine-protein phosphatase OCA1 (OCA1) from Mycosarcoma maydis (Corn smut fungus).